Consider the following 141-residue polypeptide: Large ribosomal subunit protein uL11 (141 aa).

It belongs to the universal ribosomal protein uL11 family. As to quaternary structure, part of the ribosomal stalk of the 50S ribosomal subunit. Interacts with L10 and the large rRNA to form the base of the stalk. L10 forms an elongated spine to which L12 dimers bind in a sequential fashion forming a multimeric L10(L12)X complex. Post-translationally, one or more lysine residues are methylated.

In terms of biological role, forms part of the ribosomal stalk which helps the ribosome interact with GTP-bound translation factors. This chain is Large ribosomal subunit protein uL11, found in Alkaliphilus oremlandii (strain OhILAs) (Clostridium oremlandii (strain OhILAs)).